The primary structure comprises 229 residues: Interleukin-22 receptor subunit alpha-2 (229 aa).

The N-terminal stretch at 1–19 (MPKHCFLGLLIMLLTTATE) is a signal peptide. Fibronectin type-III domains follow at residues 28–127 (KPQK…TKLD) and 128–229 (PPVV…VQIP). The N-linked (GlcNAc...) asparagine glycan is linked to N54. 2 disulfides stabilise this stretch: C76-C84 and C204-C225.

Belongs to the type II cytokine receptor family.

Its subcellular location is the secreted. In terms of biological role, receptor for IL22. Binds to IL22, prevents interaction with the functional IL-22R complex and blocks the activity of IL22 (in vitro). May play an important role as an IL22 antagonist in the regulation of inflammatory responses. This Rattus norvegicus (Rat) protein is Interleukin-22 receptor subunit alpha-2 (Il22ra2).